Reading from the N-terminus, the 333-residue chain is Complement C1q and tumor necrosis factor-related protein 9 (333 aa).

Residues 1 to 19 (MRIWWLLLVMGACTRSVFS) form the signal peptide. Residues 22-194 (TCRQGHSGIP…GDRGEKGKVG (173 aa)) are disordered. Collagen-like domains follow at residues 24-82 (RQGH…DGRV), 84-130 (AKGI…KGEV), and 134-193 (GPEG…KGKV). Pro31, Pro34, and Pro40 each carry 4-hydroxyproline. A compositionally biased stretch (basic and acidic residues) spans 42-57 (RDGRDGAKGDKGDAGE). Residues Pro58, Pro61, and Pro64 each carry the 4-hydroxyproline modification. The span at 67–88 (DGIRGEKGEPGADGRVEAKGIK) shows a compositional bias: basic and acidic residues. Position 73 is a 5-hydroxylysine (Lys73). O-linked (Gal...) hydroxylysine glycosylation occurs at Lys73. Residues Pro76 and Pro115 each carry the 4-hydroxyproline modification. 5-hydroxylysine is present on Lys127. Lys127 is a glycosylation site (O-linked (Gal...) hydroxylysine). A 4-hydroxyproline mark is found at Pro151, Pro160, and Pro175. The span at 183–193 (WKGDRGEKGKV) shows a compositional bias: basic and acidic residues. Residues 197–333 (PLVPKSAFTV…FTGFLLFSSS (137 aa)) enclose the C1q domain.

As to quaternary structure, multimers (predominantly trimers). Interacts with ADIPOQ via the C1q domain to form a heterotrimeric complex. In terms of processing, the isomeric forms of the hydroxylated amino acids could not be determined in the mass-spectrometric methods reported in PubMed:18787108 but are assumed on the basis of their occurrence in collagen-like domains. As to expression, expressed predominantly in adipose tissue. Females express higher levels than males.

It localises to the secreted. In terms of biological role, probable adipokine. Activates AMPK, AKT, and p44/42 MAPK signaling pathways. In Mus musculus (Mouse), this protein is Complement C1q and tumor necrosis factor-related protein 9 (C1qtnf9).